We begin with the raw amino-acid sequence, 108 residues long: DNA-directed RNA polymerase III subunit RPC10 (108 aa).

Residues Cys-5, Cys-8, Cys-25, Cys-28, Cys-69, and Cys-72 each contribute to the Zn(2+) site. The segment at Cys-5 to Cys-28 adopts a C4-type zinc-finger fold. The TFIIS-type zinc-finger motif lies at Thr-65–Arg-107. The Hairpin motif lies at Asp-88–Glu-89. Residues Cys-98 and Cys-102 each contribute to the Zn(2+) site.

The protein belongs to the archaeal RpoM/eukaryotic RPA12/RPB9/RPC11 RNA polymerase family. Component of the RNA polymerase III complex consisting of 17 subunits: a ten-subunit horseshoe-shaped catalytic core composed of POLR3A/RPC1, POLR3B/RPC2, POLR1C/RPAC1, POLR1D/RPAC2, POLR3K/RPC10, POLR2E/RPABC1, POLR2F/RPABC2, POLR2H/RPABC3, POLR2K/RPABC4 and POLR2L/RPABC5; a mobile stalk composed of two subunits POLR3H/RPC8 and CRCP/RPC9, protruding from the core and functioning primarily in transcription initiation; and additional subunits homologous to general transcription factors of the RNA polymerase II machinery, POLR3C/RPC3-POLR3F/RPC6-POLR3G/RPC7 heterotrimer required for transcription initiation and POLR3D/RPC4-POLR3E/RPC5 heterodimer involved in both transcription initiation and termination.

The protein resides in the nucleus. Its function is as follows. Core component of RNA polymerase III (Pol III) which synthesizes small non-coding RNAs using the four ribonucleoside triphosphates as substrates. Can mediate Pol I proofreading of the nascent RNA transcript. Anchors into the Pol III active site to constantly monitor transcription fidelity, cleaves mis-incorporated 5'-ribonucleotides and restarts the transcription process. Once Pol III reaches the poly(dT) termination signal, can induce Pol III clamp opening and transcription termination. Pol III plays an important role in sensing and limiting infection by intracellular bacteria and DNA viruses. Acts as a nuclear and cytosolic DNA sensor involved in innate immune response. Can sense non-self dsDNA that serves as template for transcription into dsRNA. The non-self RNA polymerase III transcripts, such as Epstein-Barr virus-encoded RNAs (EBERs) induce type I interferon and NF-kappa-B through the RIG-I pathway. This Bos taurus (Bovine) protein is DNA-directed RNA polymerase III subunit RPC10 (POLR3K).